The following is a 1140-amino-acid chain: Condensin-2 complex subunit G2 (1140 aa).

One copy of the HEAT repeat lies at 460-493 (LLPALKSSLHDSSEKVRVAFVGMLLKIKAARAAK).

As to quaternary structure, component of the condensin-2 complex, which contains the smc2 and smc4 heterodimer, and three non SMC subunits that probably regulate the complex: ncaph2, ncapd3 and ncapg2.

It localises to the nucleus. Functionally, regulatory subunit of the condensin-2 complex, a complex which establishes mitotic chromosome architecture and is involved in physical rigidity of the chromatid axis. Plays a role in the embryonic development of the head and kidney structures. The chain is Condensin-2 complex subunit G2 from Danio rerio (Zebrafish).